A 443-amino-acid polypeptide reads, in one-letter code: UDP-N-acetylmuramate--L-alanine ligase (443 aa).

110–116 (GAHGKTS) contacts ATP.

The protein belongs to the MurCDEF family.

The protein localises to the cytoplasm. The catalysed reaction is UDP-N-acetyl-alpha-D-muramate + L-alanine + ATP = UDP-N-acetyl-alpha-D-muramoyl-L-alanine + ADP + phosphate + H(+). It functions in the pathway cell wall biogenesis; peptidoglycan biosynthesis. In terms of biological role, cell wall formation. The chain is UDP-N-acetylmuramate--L-alanine ligase from Lactococcus lactis subsp. cremoris (strain SK11).